The sequence spans 335 residues: Matrix protein (335 aa).

It belongs to the morbillivirus/respirovirus/rubulavirus M protein family. Homodimer. Dimerization is critical for virion formation. Interacts with host ANP32B.

It localises to the virion. The protein resides in the host cell membrane. Its function is as follows. The M protein has a crucial role in virus assembly and interacts with the RNP complex as well as with the viral membrane. Associates with phosphatidylserine (PS) and phosphatidylinositol 4,5-bisphosphate (PIP2) at the plasma membrane. Interaction with PIP2 triggers matrix protein lattice polymerization. Matrix proteins induce host membrane deformation and curvature necessary for virion assembly/budding. The polypeptide is Matrix protein (M) (Measles virus (strain IP-3-Ca) (MeV)).